A 419-amino-acid chain; its full sequence is L-rhamnose isomerase (419 aa).

Mn(2+)-binding residues include His262, Asp294, and Asp296.

The protein belongs to the rhamnose isomerase family. As to quaternary structure, homotetramer. Mn(2+) serves as cofactor.

The protein localises to the cytoplasm. The catalysed reaction is L-rhamnopyranose = L-rhamnulose. It participates in carbohydrate degradation; L-rhamnose degradation; glycerone phosphate from L-rhamnose: step 1/3. Functionally, catalyzes the interconversion of L-rhamnose and L-rhamnulose. The sequence is that of L-rhamnose isomerase from Shigella sonnei (strain Ss046).